The primary structure comprises 487 residues: 3-octaprenyl-4-hydroxybenzoate carboxy-lyase (487 aa).

Asn-172 contacts Mn(2+). Residues 175-177, 189-191, and 194-195 contribute to the prenylated FMN site; these read IYR, RWL, and RG. Glu-238 serves as a coordination point for Mn(2+). Asp-287 serves as the catalytic Proton donor.

It belongs to the UbiD family. As to quaternary structure, homohexamer. It depends on prenylated FMN as a cofactor. The cofactor is Mn(2+).

The protein resides in the cell membrane. It carries out the reaction a 4-hydroxy-3-(all-trans-polyprenyl)benzoate + H(+) = a 2-(all-trans-polyprenyl)phenol + CO2. The protein operates within cofactor biosynthesis; ubiquinone biosynthesis. In terms of biological role, catalyzes the decarboxylation of 3-octaprenyl-4-hydroxy benzoate to 2-octaprenylphenol, an intermediate step in ubiquinone biosynthesis. The polypeptide is 3-octaprenyl-4-hydroxybenzoate carboxy-lyase (Dechloromonas aromatica (strain RCB)).